The sequence spans 417 residues: MLSRSIGKAAGGLVLGLSVAAAAHAAPLFEPVTVISRASANSEPALGKLLATPSTATVQEVRVDAAATAQPQLEFELLGKRVQAVRSKVEALPDGGSIWYGQFRSPSDRLTAATSSGQDDPGNSLILVRSGDTITGSIRKDGKLYRLRPLGNRHVLVEVDESRMPADHPADYNQLPKIPMADNDHIGIAQASSGTPATIRVLVVATNAAVTAYGGNMQSLVQLAVAESNQGYVNSNVGLTLQLAGYETTNYSESGNFTTDLSRFRGTSDGYMDSIHTSRNTTAADVGVLLINNSAYCGLASGIGSTASTAFAAVYWDCATGYYSFAHEIGHLQSARHDIATDSSTSPYAYGHGYRYEPATGTGWRTIMAYNCTRSCPRLNYWSNPNISYNGIPMGNASTADNQRVLVNTKATIAAFR.

The N-terminal stretch at 1 to 25 is a signal peptide; that stretch reads MLSRSIGKAAGGLVLGLSVAAAAHA. H327 lines the Zn(2+) pocket. Residue E328 is part of the active site. Residues H331 and H337 each coordinate Zn(2+).

It belongs to the peptidase M72 family. Zn(2+) serves as cofactor.

The enzyme catalyses Cleavage of Xaa-|-Asp, Xaa-|-Glu and Xaa-|-cysteic acid bonds.. Functionally, metalloprotease, specifically cleaves on the N-terminal side of aspartyl, glutamyl and cysteic acid residues. The polypeptide is Peptidyl-Asp metalloendopeptidase (Stenotrophomonas maltophilia (strain K279a)).